A 491-amino-acid polypeptide reads, in one-letter code: Cysteine--tRNA ligase (491 aa).

Zn(2+) is bound at residue Cys31. Positions 33 to 43 (PTVYGDAHLGH) match the 'HIGH' region motif. Cys226, His251, and Glu255 together coordinate Zn(2+). The 'KMSKS' region signature appears at 283–287 (KMGKS). Lys286 lines the ATP pocket.

Belongs to the class-I aminoacyl-tRNA synthetase family. As to quaternary structure, monomer. Zn(2+) is required as a cofactor.

The protein localises to the cytoplasm. It catalyses the reaction tRNA(Cys) + L-cysteine + ATP = L-cysteinyl-tRNA(Cys) + AMP + diphosphate. This is Cysteine--tRNA ligase from Bacteroides fragilis (strain ATCC 25285 / DSM 2151 / CCUG 4856 / JCM 11019 / LMG 10263 / NCTC 9343 / Onslow / VPI 2553 / EN-2).